We begin with the raw amino-acid sequence, 394 residues long: Elongation factor Tu 1 (394 aa).

The region spanning 10-204 (KPHVNVGTIG…ALDSYIPEPQ (195 aa)) is the tr-type G domain. The tract at residues 19–26 (GHVDHGKT) is G1. 19–26 (GHVDHGKT) contributes to the GTP binding site. A Mg(2+)-binding site is contributed by threonine 26. The interval 60-64 (GITIN) is G2. The interval 81–84 (DCPG) is G3. Residues 81–85 (DCPGH) and 136–139 (NKCD) each bind GTP. Positions 136–139 (NKCD) are G4. A G5 region spans residues 174–176 (SAL).

The protein belongs to the TRAFAC class translation factor GTPase superfamily. Classic translation factor GTPase family. EF-Tu/EF-1A subfamily. Monomer.

Its subcellular location is the cytoplasm. The enzyme catalyses GTP + H2O = GDP + phosphate + H(+). GTP hydrolase that promotes the GTP-dependent binding of aminoacyl-tRNA to the A-site of ribosomes during protein biosynthesis. The chain is Elongation factor Tu 1 from Shewanella baltica (strain OS195).